Here is a 522-residue protein sequence, read N- to C-terminus: Glutathione reductase, mitochondrial (522 aa).

Residues 1 to 43 (MALLPRALSSGGRPSWRRAARASRGFPLPLPFPAAATHALSRA) constitute a mitochondrion transit peptide. 2 residues coordinate FAD: serine 74 and glycine 75. Position 74 (serine 74) interacts with glutathione. Residue arginine 81 participates in glutathione binding. Glutamate 94 lines the FAD pocket. At lysine 97 the chain carries N6-acetyllysine. The FAD site is built by threonine 101, cysteine 102, and lysine 110. A disulfide bridge links cysteine 102 with cysteine 107. Tyrosine 158 contributes to the glutathione binding site. Residue alanine 174 participates in FAD binding. Positions 239, 242, 245, 262, 268, and 334 each coordinate NADP(+). Residue aspartate 375 coordinates FAD. Leucine 381 serves as a coordination point for NADP(+). Residue threonine 383 participates in FAD binding. Arginine 391 contacts glutathione. Valine 414 contributes to the NADP(+) binding site. Position 511 (histidine 511) interacts with FAD. Histidine 511 acts as the Proton acceptor in catalysis.

Belongs to the class-I pyridine nucleotide-disulfide oxidoreductase family. As to quaternary structure, homodimer; disulfide-linked. The cofactor is FAD.

The protein resides in the mitochondrion. It localises to the cytoplasm. The enzyme catalyses 2 glutathione + NADP(+) = glutathione disulfide + NADPH + H(+). In terms of biological role, catalyzes the reduction of glutathione disulfide (GSSG) to reduced glutathione (GSH). Constitutes the major mechanism to maintain a high GSH:GSSG ratio in the cytosol. This chain is Glutathione reductase, mitochondrial (GSR), found in Callithrix jacchus (White-tufted-ear marmoset).